The sequence spans 278 residues: 4-deoxy-L-threo-5-hexosulose-uronate ketol-isomerase (278 aa).

Residues His196, His198, Glu203, and His245 each contribute to the Zn(2+) site.

The protein belongs to the KduI family. As to quaternary structure, homohexamer. The cofactor is Zn(2+).

It carries out the reaction 5-dehydro-4-deoxy-D-glucuronate = 3-deoxy-D-glycero-2,5-hexodiulosonate. It participates in glycan metabolism; pectin degradation; 2-dehydro-3-deoxy-D-gluconate from pectin: step 4/5. Catalyzes the isomerization of 5-dehydro-4-deoxy-D-glucuronate to 3-deoxy-D-glycero-2,5-hexodiulosonate. The sequence is that of 4-deoxy-L-threo-5-hexosulose-uronate ketol-isomerase from Escherichia coli (strain 55989 / EAEC).